Consider the following 54-residue polypeptide: Protein GndA (54 aa).

The chain crosses the membrane as a helical span at residues 28-50 (LFVVIVSFQQRALTSSVPVFLAV).

It is found in the cell inner membrane. In Escherichia coli (strain K12), this protein is Protein GndA.